The sequence spans 219 residues: Thymidylate kinase (219 aa).

7–14 (GIDGAGKS) serves as a coordination point for ATP.

It belongs to the thymidylate kinase family.

It carries out the reaction dTMP + ATP = dTDP + ADP. Its function is as follows. Phosphorylation of dTMP to form dTDP in both de novo and salvage pathways of dTTP synthesis. This is Thymidylate kinase from Chlorobium phaeobacteroides (strain DSM 266 / SMG 266 / 2430).